Here is a 347-residue protein sequence, read N- to C-terminus: 4-hydroxy-2-oxovalerate aldolase (347 aa).

The region spanning 2–252 (ILISDATLRD…DTRTTFERVM (251 aa)) is the Pyruvate carboxyltransferase domain. 10-11 (RD) provides a ligand contact to substrate. Asp11 is a binding site for Mn(2+). The Proton acceptor role is filled by His14. Residues Ser164 and His191 each contribute to the substrate site. The Mn(2+) site is built by His191 and His193.

This sequence belongs to the 4-hydroxy-2-oxovalerate aldolase family.

The catalysed reaction is (S)-4-hydroxy-2-oxopentanoate = acetaldehyde + pyruvate. In Burkholderia pseudomallei (strain 1710b), this protein is 4-hydroxy-2-oxovalerate aldolase (mhpE).